We begin with the raw amino-acid sequence, 345 residues long: Anthranilate phosphoribosyltransferase (345 aa).

Residues Gly84, 87–88 (GD), Thr92, 94–97 (NIST), 112–120 (KHGNRSVSS), and Ser124 contribute to the 5-phospho-alpha-D-ribose 1-diphosphate site. Gly84 contributes to the anthranilate binding site. Ser96 contacts Mg(2+). Residue Asn115 coordinates anthranilate. Arg170 serves as a coordination point for anthranilate. Mg(2+)-binding residues include Asp229 and Glu230.

This sequence belongs to the anthranilate phosphoribosyltransferase family. Homodimer. Mg(2+) is required as a cofactor.

It carries out the reaction N-(5-phospho-beta-D-ribosyl)anthranilate + diphosphate = 5-phospho-alpha-D-ribose 1-diphosphate + anthranilate. It participates in amino-acid biosynthesis; L-tryptophan biosynthesis; L-tryptophan from chorismate: step 2/5. Functionally, catalyzes the transfer of the phosphoribosyl group of 5-phosphorylribose-1-pyrophosphate (PRPP) to anthranilate to yield N-(5'-phosphoribosyl)-anthranilate (PRA). This chain is Anthranilate phosphoribosyltransferase, found in Xanthomonas axonopodis pv. citri (strain 306).